We begin with the raw amino-acid sequence, 479 residues long: Solute carrier family 7 member 13 (479 aa).

Over 1–14 (MAMDIEKKIYLKRQ) the chain is Cytoplasmic. Residues 15–35 (LGYFWGTNFLIINIIGAGIFV) traverse the membrane as a helical segment. Topologically, residues 36–47 (SPKGVLQYSSMN) are extracellular. Residues 48 to 68 (VGVSLCVWVFCAVLSMTSTLC) traverse the membrane as a helical segment. Residues 69–89 (AAEIGITFPYTVAHYYFLKRC) lie on the Cytoplasmic side of the membrane. Residues 90 to 110 (FGPFVAFLRLWTSLFTGPGVL) form a helical membrane-spanning segment. Residues 111–129 (ASQALLLAEYGIQPFYPSC) are Extracellular-facing. A helical membrane pass occupies residues 130-150 (SAPAVPKKCLALAMLWIVGIL). Over 151-165 (NSRGVKELSWLQTVS) the chain is Cytoplasmic. Residues 166-186 (MVLKMGILSFISLSGLFLLVT) traverse the membrane as a helical segment. Residues 187–208 (GRKENVRRLQNAFDAEFPEVSR) are Extracellular-facing. A helical transmembrane segment spans residues 209-229 (LIEAIFQGYFAFSGGGSFTYV). At 230-242 (AGELKEPSKTIPR) the chain is on the cytoplasmic side. The chain crosses the membrane as a helical span at residues 243–263 (CIFTALPLVTVVYLLANLSYL). Topologically, residues 264 to 289 (TVLSPQELLSSDAVALTWTDRVIPQL) are extracellular. The helical transmembrane segment at 290–310 (TWSVPFAISASLFSNLVTSVF) threads the bilayer. The Cytoplasmic portion of the chain corresponds to 311 to 338 (ETSRTSYIASRNGQLPLLCSTLNVHSSP). The chain crosses the membrane as a helical span at residues 339-359 (FIAVLLDVSMGSIAIVLTNLI). A topological domain (extracellular) is located at residue glutamate 360. The chain crosses the membrane as a helical span at residues 361–381 (LINYLFFVFSIWTVLSVIGIL). Residues 382-396 (KLRYQEPNLHRPYKV) lie on the Cytoplasmic side of the membrane. A helical membrane pass occupies residues 397–417 (FSPFLFITAAISLSMVLIPLI). The Extracellular segment spans residues 418-423 (KSPKMQ). A helical transmembrane segment spans residues 424–444 (YIYVFLFFLGGLLFYVPLIHF). At 445 to 479 (KLKLIWFQKLTCYLQLLFNICIPDVSDEHVAEEES) the chain is on the cytoplasmic side.

The protein belongs to the amino acid-polyamine-organocation (APC) superfamily. As to quaternary structure, disulfide-linked heterodimer composed of the catalytic light subunit SLC7A13 and the heavy subunit SLC3A1.

The protein resides in the apical cell membrane. It carries out the reaction L-cystine(out) + L-aspartate(in) = L-cystine(in) + L-aspartate(out). It catalyses the reaction L-cystine(out) = L-cystine(in). The enzyme catalyses L-aspartate(in) + L-glutamate(out) = L-aspartate(out) + L-glutamate(in). The catalysed reaction is L-aspartate(in) + L-glutamine(out) = L-aspartate(out) + L-glutamine(in). It carries out the reaction L-aspartate(in) + L-methionine(out) = L-aspartate(out) + L-methionine(in). It catalyses the reaction L-leucine(out) + L-aspartate(in) = L-leucine(in) + L-aspartate(out). The enzyme catalyses L-valine(out) + L-aspartate(in) = L-valine(in) + L-aspartate(out). The catalysed reaction is L-aspartate(in) + L-phenylalanine(out) = L-aspartate(out) + L-phenylalanine(in). It carries out the reaction L-tyrosine(out) + L-aspartate(in) = L-tyrosine(in) + L-aspartate(out). It catalyses the reaction L-tryptophan(out) + L-aspartate(in) = L-tryptophan(in) + L-aspartate(out). Functionally, associates with SLC3A1/rBAT to form a functional heterodimeric complex that transports anionic and neutral amino acids across the apical plasma membrane of renal epithelium. Preferentially mediates exchange transport, but can also operate via facilitated diffusion. May act as a major transporter for L-cystine in late proximal tubules, ensuring its reabsorption from the luminal fluid in exchange for cytosolic L-glutamate or L-aspartate. The chain is Solute carrier family 7 member 13 (Slc7a13) from Rattus norvegicus (Rat).